A 328-amino-acid chain; its full sequence is Oligopeptide transport ATP-binding protein AppD (328 aa).

Positions 5 to 256 (LEVNNLKTYF…PLHPYTEGLL (252 aa)) constitute an ABC transporter domain. 41–48 (GESGSGKS) contributes to the ATP binding site.

The protein belongs to the ABC transporter superfamily.

Its subcellular location is the cell membrane. In terms of biological role, this protein is a component of an oligopeptide permease, a binding protein-dependent transport system. This APP system can completely substitute for the OPP system in both sporulation and genetic competence, though, unlike OPP, is incapable of transporting tripeptides. Probably responsible for energy coupling to the transport system. This chain is Oligopeptide transport ATP-binding protein AppD (appD), found in Bacillus subtilis (strain 168).